Consider the following 338-residue polypeptide: Phosphate acyltransferase (338 aa).

The protein belongs to the PlsX family. As to quaternary structure, homodimer. Probably interacts with PlsY.

The protein resides in the cytoplasm. It carries out the reaction a fatty acyl-[ACP] + phosphate = an acyl phosphate + holo-[ACP]. It participates in lipid metabolism; phospholipid metabolism. Catalyzes the reversible formation of acyl-phosphate (acyl-PO(4)) from acyl-[acyl-carrier-protein] (acyl-ACP). This enzyme utilizes acyl-ACP as fatty acyl donor, but not acyl-CoA. This Mannheimia succiniciproducens (strain KCTC 0769BP / MBEL55E) protein is Phosphate acyltransferase.